The sequence spans 633 residues: Membrane protein insertase YidC (633 aa).

6 helical membrane-spanning segments follow: residues 3 to 23 (KNTL…SWFN), 377 to 397 (FIHN…IILF), 453 to 473 (LPML…PSAI), 499 to 519 (IPII…LMTI), 541 to 561 (GMKA…NQYA), and 562 to 582 (SGLT…TLIF). A disordered region spans residues 612 to 633 (LEEAQRAQQETLRKQQEAKKKR).

This sequence belongs to the OXA1/ALB3/YidC family. Type 1 subfamily. As to quaternary structure, interacts with the Sec translocase complex via SecD. Specifically interacts with transmembrane segments of nascent integral membrane proteins during membrane integration.

The protein resides in the cell inner membrane. Required for the insertion and/or proper folding and/or complex formation of integral membrane proteins into the membrane. Involved in integration of membrane proteins that insert both dependently and independently of the Sec translocase complex, as well as at least some lipoproteins. Aids folding of multispanning membrane proteins. The sequence is that of Membrane protein insertase YidC from Parabacteroides distasonis (strain ATCC 8503 / DSM 20701 / CIP 104284 / JCM 5825 / NCTC 11152).